A 215-amino-acid chain; its full sequence is Ribonuclease T (215 aa).

Residues valine 20–phenylalanine 194 form the Exonuclease domain. Mg(2+) is bound by residues aspartate 23, glutamate 25, histidine 181, and aspartate 186. Catalysis depends on histidine 181, which acts as the Proton donor/acceptor.

This sequence belongs to the RNase T family. As to quaternary structure, homodimer. Mg(2+) serves as cofactor.

In terms of biological role, trims short 3' overhangs of a variety of RNA species, leaving a one or two nucleotide 3' overhang. Responsible for the end-turnover of tRNA: specifically removes the terminal AMP residue from uncharged tRNA (tRNA-C-C-A). Also appears to be involved in tRNA biosynthesis. This chain is Ribonuclease T, found in Shigella dysenteriae serotype 1 (strain Sd197).